Here is a 157-residue protein sequence, read N- to C-terminus: Putative pre-16S rRNA nuclease (157 aa).

Belongs to the YqgF nuclease family.

Its subcellular location is the cytoplasm. Its function is as follows. Could be a nuclease involved in processing of the 5'-end of pre-16S rRNA. The protein is Putative pre-16S rRNA nuclease of Orientia tsutsugamushi (strain Ikeda) (Rickettsia tsutsugamushi).